Reading from the N-terminus, the 353-residue chain is Photosystem II D2 protein (353 aa).

T2 is subject to N-acetylthreonine. Residue T2 is modified to Phosphothreonine. Residues 41–61 (CAYFALGGWFTGTTFVTSWYT) traverse the membrane as a helical segment. Residue H118 coordinates chlorophyll a. A helical membrane pass occupies residues 125 to 141 (GFMLRQFELARSVQLRP). Positions 130 and 143 each coordinate pheophytin a. Residues 153–166 (VFVSVFLIYPLGQS) traverse the membrane as a helical segment. H198 lines the chlorophyll a pocket. The helical transmembrane segment at 208 to 228 (AALLCAIHGATVENTLFEDGD) threads the bilayer. A plastoquinone contacts are provided by H215 and F262. H215 contributes to the Fe cation binding site. H269 is a Fe cation binding site. A helical transmembrane segment spans residues 279 to 295 (GLWMSAIGVVGLALNLR).

The protein belongs to the reaction center PufL/M/PsbA/D family. PSII is composed of 1 copy each of membrane proteins PsbA, PsbB, PsbC, PsbD, PsbE, PsbF, PsbH, PsbI, PsbJ, PsbK, PsbL, PsbM, PsbT, PsbX, PsbY, PsbZ, Psb30/Ycf12, at least 3 peripheral proteins of the oxygen-evolving complex and a large number of cofactors. It forms dimeric complexes. Requires The D1/D2 heterodimer binds P680, chlorophylls that are the primary electron donor of PSII, and subsequent electron acceptors. It shares a non-heme iron and each subunit binds pheophytin, quinone, additional chlorophylls, carotenoids and lipids. There is also a Cl(-1) ion associated with D1 and D2, which is required for oxygen evolution. The PSII complex binds additional chlorophylls, carotenoids and specific lipids. as cofactor.

The protein localises to the plastid. The protein resides in the chloroplast thylakoid membrane. It carries out the reaction 2 a plastoquinone + 4 hnu + 2 H2O = 2 a plastoquinol + O2. Its function is as follows. Photosystem II (PSII) is a light-driven water:plastoquinone oxidoreductase that uses light energy to abstract electrons from H(2)O, generating O(2) and a proton gradient subsequently used for ATP formation. It consists of a core antenna complex that captures photons, and an electron transfer chain that converts photonic excitation into a charge separation. The D1/D2 (PsbA/PsbD) reaction center heterodimer binds P680, the primary electron donor of PSII as well as several subsequent electron acceptors. D2 is needed for assembly of a stable PSII complex. The protein is Photosystem II D2 protein of Pinus thunbergii (Japanese black pine).